Reading from the N-terminus, the 282-residue chain is uncharacterized protein (282 aa).

The chain crosses the membrane as a helical span at residues tyrosine 22 to phenylalanine 42.

It is found in the cell membrane. This is an uncharacterized protein from Bacillus anthracis.